Reading from the N-terminus, the 780-residue chain is MMRCLTITIMFFMFFFLSVIQKCKSETSKSGDYIIYMGAASSDGSTDNDHVELLSSLLQRSGKTPMHRYKHGFSGFAAHLSEDEAHLIAKQPGVLSVFPDQMLQLHTTRSWDFLVQESYQRDTYFTEMNYEQESEMHEGDTIIGFLDSGIWPEAQSFNDRHMGPVPEKWKGTCMRGKKTQPDSFRCNRKLIGARYYNSSFFLDPDYETPRDFLGHGTHVASIAAGQIIANASYYGLASGIMRGGSPSSRIAMYRACSLLGCRGSSILAAFDDAIADGVDVISISMGLWPDNLLEDPLSIGSFHAVERGITVVCSVGNSGPSSQSVFNAAPWMITVAASTIDRGFESNILLGGDENRLIEGFGINIANIDKTQAYPLIHARSAKKIDANEEAARNCAPDTLDQTIVKGKIVVCDSDLDNQVIQWKSDEVKRLGGIGMVLVDDESMDLSFIDPSFLVTIIKPEDGIQIMSYINSTREPIATIMPTRSRTGHMLAPSIPSFSSRGPYLLTRSILKPDIAAPGVNILASWLVGDRNAAPEGKPPPLFNIESGTSMSCPHVSGIAARLKSRYPSWSPAAIRSAIMTTAVQMTNTGSHITTETGEKATPYDFGAGQVTIFGPSSPGLIYETNHMDYLNFLGYYGFTSDQIKKISNRIPQGFACPEQSNRGDISNINYPSISISNFNGKESRRVSRTVTNVASRLIGDEDTVYTVSIDAPEGLLVRVIPRRLHFRKIGDKLSYQVIFSSTTTILKDDAFGSITWSNGMYNVRSPFVVTSKDDNDSER.

The N-terminal stretch at 1–25 is a signal peptide; sequence MMRCLTITIMFFMFFFLSVIQKCKS. Positions 26–106 are cleaved as a propeptide — activation peptide; sequence ETSKSGDYII…VFPDQMLQLH (81 aa). The Inhibitor I9 domain occupies 33-106; sequence YIIYMGAASS…VFPDQMLQLH (74 aa). In terms of domain architecture, Peptidase S8 spans 110–617; the sequence is SWDFLVQESY…AGQVTIFGPS (508 aa). Asp147 (charge relay system) is an active-site residue. N-linked (GlcNAc...) asparagine glycosylation is present at Asn197. His215 (charge relay system) is an active-site residue. Asn230 carries an N-linked (GlcNAc...) asparagine glycan. Residues 385-469 enclose the PA domain; the sequence is IDANEEAARN…PEDGIQIMSY (85 aa). Asn471 carries N-linked (GlcNAc...) asparagine glycosylation. The active-site Charge relay system is Ser550. Residue Asn776 is glycosylated (N-linked (GlcNAc...) asparagine).

It belongs to the peptidase S8 family.

Its subcellular location is the secreted. The protein is Subtilisin-like protease SBT5.1 of Arabidopsis thaliana (Mouse-ear cress).